We begin with the raw amino-acid sequence, 377 residues long: EPS I polysaccharide export outer membrane protein EpsA (377 aa).

The signal sequence occupies residues 1 to 23; it reads MFVSIPSIRKTVMSLCAVPLMAA. Cys-24 is lipidated: N-palmitoyl cysteine. Cys-24 carries S-diacylglycerol cysteine lipidation.

Belongs to the BexD/CtrA/VexA family.

Its subcellular location is the cell outer membrane. Functionally, probably involved in polymerization and/or export of exopolysaccharide EPS I which functions as a virulence factor. This chain is EPS I polysaccharide export outer membrane protein EpsA (epsA), found in Ralstonia solanacearum (Pseudomonas solanacearum).